A 351-amino-acid polypeptide reads, in one-letter code: Phenylalanine--tRNA ligase alpha subunit (351 aa).

Glu-276 contacts Mg(2+).

The protein belongs to the class-II aminoacyl-tRNA synthetase family. Phe-tRNA synthetase alpha subunit type 1 subfamily. As to quaternary structure, tetramer of two alpha and two beta subunits. It depends on Mg(2+) as a cofactor.

It localises to the cytoplasm. It carries out the reaction tRNA(Phe) + L-phenylalanine + ATP = L-phenylalanyl-tRNA(Phe) + AMP + diphosphate + H(+). In Psychrobacter arcticus (strain DSM 17307 / VKM B-2377 / 273-4), this protein is Phenylalanine--tRNA ligase alpha subunit.